Here is a 1377-residue protein sequence, read N- to C-terminus: MAQTHSFNGRKRVRKFFGKIPEVAEMPNLIEVQKASYDQFLMVEEPSGGRPDEGLQAVFKSVFPIQDFSGASMLEFVRYEFDPPKFDVDECRQRDLTYSAPLKVTLRLIVFDIDEDTGAKSIKDIKEQDVYMGDMPLMTDNGTFIVNGTERVIVSQMHRSPGVFFDHDKGKTHSSGKLLFAARVIPYRGSWLDIEFDSKDIVYARIDRRRKLPATTLLMALGMDGEEILSTFYKTVTYTRDGDNWRIPYSAERFKGMKIISDLVDADTGEVVLEAGKKLTARAAKQLAEKGLKAIKATEDDLFGSYLAEDVVNYATGEIYLEAGDEIDEKVLKTLIDTGETEINVLDIDHVNIGAYIRNTLAVDKNESRQEALFDIYRVMRPGEPPTMDSAEAMFHSLFFDSERYDLSAVGRVKMNMRLDLDAEDTVRVLRKEDILAVVKMLVELRDGRGEIDDIDNLGNRRVRSVGELMENQYRVGLLRMERAIKERMSSIEIDTVMPQDLINAKPAAAAVREFFGSSQLSQFMDQTNPLSEITHKRRLSALGPGGLTRERAGFEVRDVHPTHYGRICPIETPEGPNIGLINSLATFARVNKYGFIESPYRKVVDGKVTNDVVYLSAMEEAKHSIAQANVELDEQGGFVDEFVICRHAGEVMMAPRENVDLMDVSPKQLVSVAAALIPFLENDDANRALMGSNMQRQAVPLVRAEAPFVGTGMEPIVARDSGAAIAARRGGIVDQVDATRIVIRATEELDPSKSGVDIYRLQKFQRSNQSTCINQRPLVRVGDRIHKGDIIADGPSTDLGDLALGRNVLVAFMPWNGYNYEDSILLSEKIVSDDVFTSIHIEEFEVAARDTKLGPEEITRDIPNVSEEALKNLDEAGIVYIGAEVHPGDILVGKITPKGESPMTPEEKLLRAIFGEKASDVRDTSMRMPPGTYGTVVEVRVFNRHGVEKDERAMAIEREEIERLAKDRDDEQAILDRNVYGRLADMIDGKVAAAGPKGFKKGTTITRELMTEYPRSQWWQFAVEDEKLQGELEALRSQYDDSKKLLEARFMDKVEKVQRGDEMPPGVMKMVKVFVAVKRKIQPGDKMAGRHGNKGVVSRILPVEDMPFLEDGTHADIVLNPLGVPSRMNVGQILETHLGWACAGMGKKIGELLDVYRKTANIEPLRQTLEHIYPDNDRNEPVRSYDDDAILMLANQVKRGVSIATPVFDGAVEADINAMLTDAGLATSGQSTLYDGRTGEPFDRQVTMGYIYMLKLHHLVDDKIHARSIGPYSLVTQQPLGGKAQFGGQRFGEMEVWALEAYGAAYTLQEMLTVKSDDVAGRTKVYEAIVRGDDTFEAGIPESFNVLVKEMRSLGLNVELDDTREAEQPALPDAAE.

This sequence belongs to the RNA polymerase beta chain family. In terms of assembly, the RNAP catalytic core consists of 2 alpha, 1 beta, 1 beta' and 1 omega subunit. When a sigma factor is associated with the core the holoenzyme is formed, which can initiate transcription.

It catalyses the reaction RNA(n) + a ribonucleoside 5'-triphosphate = RNA(n+1) + diphosphate. Its function is as follows. DNA-dependent RNA polymerase catalyzes the transcription of DNA into RNA using the four ribonucleoside triphosphates as substrates. The sequence is that of DNA-directed RNA polymerase subunit beta from Brucella canis (strain ATCC 23365 / NCTC 10854 / RM-666).